A 226-amino-acid polypeptide reads, in one-letter code: PtdIns3K complex I subunit atg38 (226 aa).

S2 is subject to N-acetylserine. 2 coiled-coil regions span residues 52 to 85 (DVTQ…ENNI) and 182 to 209 (FKEY…LRER).

The protein belongs to the ATG38 family. As to quaternary structure, homodimer. Component of the autophagy-specific VPS34 PI3-kinase complex I composed of VPS15, VPS30, VPS34, ATG14 and an ATG38 homodimer. Interacts directly with ATG14 and VPS34.

The protein localises to the cytoplasm. The protein resides in the preautophagosomal structure membrane. In terms of biological role, autophagy-related protein required for cytoplasm to vacuole transport (Cvt) and autophagy as a part of the autophagy-specific VPS34 PI3-kinase complex I. This complex is essential to recruit the ATG8-phosphatidylinositol conjugate and the ATG12-ATG5 conjugate to the pre-autophagosomal structure. ATG38 is required for the integrity of the active PI3-kinase complex I by maintaining an association between VPS15-VPS34 and ATG14-VPS30 subcomplexes. In Saccharomyces cerevisiae (strain ATCC 204508 / S288c) (Baker's yeast), this protein is PtdIns3K complex I subunit atg38.